Consider the following 594-residue polypeptide: Invasin CotH2 (594 aa).

Positions 1 to 19 (MKLSLTIVSSSFLVAIAHA) are cleaved as a signal peptide. 7 N-linked (GlcNAc...) asparagine glycosylation sites follow: Asn-77, Asn-162, Asn-226, Asn-316, Asn-441, Asn-519, and Asn-533. The segment at 529–565 (PPAANGTATSTNDGGNTHTAAGESKPASSSESSGSKI) is disordered. The span at 534 to 547 (GTATSTNDGGNTHT) shows a compositional bias: polar residues. A compositionally biased stretch (low complexity) spans 548–565 (AAGESKPASSSESSGSKI). The GPI-anchor amidated serine moiety is linked to residue Ser-571. The propeptide at 572-594 (GASRSAVSTVLLGVTALVATAIF) is removed in mature form.

In terms of assembly, interacts with host epithelial cell surface HSPA5/BiP protein.

The protein localises to the cell membrane. Functionally, promotes invasion of host epithelial cells by adhering to receptors on the host cell surface to facilitate endocytosis of the pathogen into host cells. Binds HSPA5/BiP protein on the cell surface of host epithelial cells. The protein is Invasin CotH2 of Rhizopus delemar (strain RA 99-880 / ATCC MYA-4621 / FGSC 9543 / NRRL 43880) (Mucormycosis agent).